The sequence spans 276 residues: Pyridinium-3,5-bisthiocarboxylic acid mononucleotide synthase (276 aa).

The Nucleophile and sulfur donor role is filled by C176. Residue C176 is modified to 2,3-didehydroalanine (Cys).

This sequence belongs to the LarE family.

It catalyses the reaction pyridinium-3,5-dicarboxylate mononucleotide + [LarE protein]-L-cysteine + ATP = [LarE protein]-dehydroalanine + pyridinium-3-carboxylate-5-thiocarboxylate mononucleotide + AMP + diphosphate + H(+). It carries out the reaction [LarE protein]-L-cysteine + pyridinium-3-carboxylate-5-thiocarboxylate mononucleotide + ATP = pyridinium-3,5-bisthiocarboxylate mononucleotide + [LarE protein]-dehydroalanine + AMP + diphosphate + H(+). In terms of biological role, involved in the biosynthesis of a nickel-pincer cofactor ((SCS)Ni(II) pincer complex). Catalyzes the ATP-dependent incorporation of two sulfur atoms in pyridinium-3,5-biscarboxylic acid mononucleotide (P2CMN) to yield pyridinium-3,5-bisthiocarboxylic acid mononucleotide (P2TMN). The source of sulfur is the enzyme itself: Cys-176 of LarE is the sulfur donor, thereby being converted into dehydroalanine, and is not regenerated in vivo. Thus, two molecules of LarE undergo sacrificial sulfur transfer to create one P2TMN. Binds nickel. Is required for the activation of the lactate racemase LarA. May also be involved in the activation of other nickel-pincer cofactor-dependent enzymes. The protein is Pyridinium-3,5-bisthiocarboxylic acid mononucleotide synthase of Lactiplantibacillus plantarum (strain ATCC BAA-793 / NCIMB 8826 / WCFS1) (Lactobacillus plantarum).